The primary structure comprises 318 residues: Putative 2-hydroxyacid dehydrogenase SH0752 (318 aa).

NAD(+) contacts are provided by residues 155–156, 234–236, and Asp260; these read EI and AGR. Arg236 is a catalytic residue. Glu265 is an active-site residue. The Proton donor role is filled by His283. Residue 283–286 participates in NAD(+) binding; sequence HIGN.

It belongs to the D-isomer specific 2-hydroxyacid dehydrogenase family.

This Staphylococcus haemolyticus (strain JCSC1435) protein is Putative 2-hydroxyacid dehydrogenase SH0752.